The sequence spans 388 residues: Phosphoglycerate kinase (388 aa).

Substrate is bound by residues 21–23 (DLN), R36, 59–62 (HLGR), R114, and R147. ATP is bound by residues K198, E315, and 341 to 344 (GGDT).

This sequence belongs to the phosphoglycerate kinase family. Monomer.

Its subcellular location is the cytoplasm. The enzyme catalyses (2R)-3-phosphoglycerate + ATP = (2R)-3-phospho-glyceroyl phosphate + ADP. Its pathway is carbohydrate degradation; glycolysis; pyruvate from D-glyceraldehyde 3-phosphate: step 2/5. The sequence is that of Phosphoglycerate kinase from Buchnera aphidicola subsp. Schizaphis graminum (strain Sg).